The following is a 226-amino-acid chain: Late expression factor 7 (226 aa).

An F-box domain is found at 9–58 (RAKRIRLPLEIIDTILQYLDPILHAKVVGLTTRVKCRLLRDNNVEDYLKL).

Interacts with host S-phase kinase-associated protein 1/SKP1.

It localises to the host nucleus. It functions in the pathway protein degradation; proteasomal ubiquitin-dependent pathway. Its function is as follows. F-box protein that manipulates the host DNA damage response (DRR) in order to promote viral multiplication. Acts as a substrate recognition component of SKP1/Cullin/F-box (SCF) complexes for targeted protein polyubiquitination. This chain is Late expression factor 7 (LEF-7), found in Lepidoptera (butterflies and moths).